A 659-amino-acid chain; its full sequence is MAKETFYITTPIYYPSGNLHIGHAYSTVAGDVISRYKRMQGYDVRYLTGTDEHGQKIQEKAQKAGKTELEYLDEMISGIKSLWSKLEISNDDFIRTTEDRHKQVVEKVFERLLKQGDIYLGEYEGWYSVPDETYYTESQLVDPIYENGKIVGGKSPDSGHEVELVKEESYFFNINKYTDRLLEFYDANPDFIQPPSRKNEMINNFIKPGLEDLAVSRTSFDWGVRVPSNPKHVVYVWIDALVNYISALGYLSDDDELFQKYWPADVHLMAKEIVRFHSIIWPILLMALDLPLPKKVFAHGWILMKDGKMSKSKGNVVDPNVLIDRYGLDATRYYLMRELPFGSDGVFTPEAFVERTNYDLANDLGNLVNRTISMINKYFQGELPAYEGPKHELDEDMEALAHETVKHFNESMESFQFSVALSTVWKFISRTNKYIDETTPWVLAKDDSQKDMLGNVMAHLVENIRFAAVLLRPFLTHAPKEIFKQLNINEPELFELESLEQYGALKQPIMVTEKPTPIFPRLDTEAEIAYIKESMQPPKSEESKDEVEEPSKAQIDIKDFDKVEIKAATITDAENVPKSDKLLKIQIDLGLEQRQIVSGIAKFYRPEDIIGKKVAVVTNLKPAKLMGQKSEGMILSAEKDGVLTLVSLPSAIPNGAVIK.

Residues 13 to 23 (YYPSGNLHIGH) carry the 'HIGH' region motif. The 'KMSKS' region motif lies at 308–312 (KMSKS). Position 311 (Lys-311) interacts with ATP. The tRNA-binding domain maps to 559 to 659 (DFDKVEIKAA…SAIPNGAVIK (101 aa)).

It belongs to the class-I aminoacyl-tRNA synthetase family. MetG type 2B subfamily. In terms of assembly, homodimer.

Its subcellular location is the cytoplasm. It carries out the reaction tRNA(Met) + L-methionine + ATP = L-methionyl-tRNA(Met) + AMP + diphosphate. In terms of biological role, is required not only for elongation of protein synthesis but also for the initiation of all mRNA translation through initiator tRNA(fMet) aminoacylation. This chain is Methionine--tRNA ligase, found in Staphylococcus haemolyticus (strain JCSC1435).